Reading from the N-terminus, the 60-residue chain is MADKKIKIRQIGSPIRRPKDQRKILTGLGLGKMHREVELVDTPEVRGMIRKLPHMVEVID.

This sequence belongs to the universal ribosomal protein uL30 family. As to quaternary structure, part of the 50S ribosomal subunit.

This is Large ribosomal subunit protein uL30 from Sphingopyxis alaskensis (strain DSM 13593 / LMG 18877 / RB2256) (Sphingomonas alaskensis).